A 256-amino-acid polypeptide reads, in one-letter code: Small ribosomal subunit protein uS2 (256 aa).

Belongs to the universal ribosomal protein uS2 family.

This Brucella melitensis biotype 1 (strain ATCC 23456 / CCUG 17765 / NCTC 10094 / 16M) protein is Small ribosomal subunit protein uS2.